Consider the following 178-residue polypeptide: MTDINYYVDLLKRNLPKYKKLKVNTLSESEAKEVVAKLLADGFGVELQSGNTFVLKSSSIPPVGVSDNTNKTTAKDNVSDKSSENEVAQPKQVTPPVDATGNTNKTAVTSMRVSIRLPAQVADALLSVYNEPNLSNAIRKAIKDALSAKGISVQFPAPVTTTTAKKSIPSIDEVFRND.

Residues 64–103 (GVSDNTNKTTAKDNVSDKSSENEVAQPKQVTPPVDATGNT) are disordered. The span at 73–84 (TAKDNVSDKSSE) shows a compositional bias: basic and acidic residues.

This is an uncharacterized protein from Acidianus sp. F28 (AFV-2).